The primary structure comprises 540 residues: [Co(II) methylated amine-specific corrinoid protein] reductase (540 aa).

4Fe-4S ferredoxin-type domains lie at 471-500 (IILE…IVER) and 504-535 (RIAK…ITKL). Positions 480, 483, 486, 490, 513, 518, 521, and 525 each coordinate [4Fe-4S] cluster.

As to quaternary structure, monomer. It depends on [4Fe-4S] cluster as a cofactor.

It catalyses the reaction 2 Co(II)-[methylamine-specific corrinoid protein] + AH2 + ATP + H2O = 2 Co(I)-[methylamine-specific corrinoid protein] + A + ADP + phosphate + 3 H(+). It carries out the reaction 2 Co(II)-[dimethylamine-specific corrinoid protein] + AH2 + ATP + H2O = 2 Co(I)-[dimethylamine-specific corrinoid protein] + A + ADP + phosphate + 3 H(+). The catalysed reaction is 2 Co(II)-[trimethylamine-specific corrinoid protein] + AH2 + ATP + H2O = 2 Co(I)-[trimethylamine-specific corrinoid protein] + A + ADP + phosphate + 3 H(+). It participates in one-carbon metabolism; methanogenesis from methylamine. The protein operates within one-carbon metabolism; methanogenesis from dimethylamine. It functions in the pathway one-carbon metabolism; methanogenesis from trimethylamine. Reductase required for the activation of corrinoid-dependent methylamine methyltransferase reactions during methanogenesis. Mediates the ATP-dependent reduction of corrinoid proteins from the inactive cobalt(II) state to the active cobalt(I) state. Acts on the corrinoid proteins involved in methanogenesis from monomethylamine (MMA), dimethylamine (DMA) and trimethylamine (TMA), namely MtmC, MtbC and MttC, respectively. This chain is [Co(II) methylated amine-specific corrinoid protein] reductase, found in Methanosarcina barkeri.